The chain runs to 1992 residues: E3 ubiquitin-protein ligase TRIP12 (1992 aa).

Residues 1–10 (MSNRPNNNPG) show a composition bias toward polar residues. Residues 1-398 (MSNRPNNNPG…SGESESDDSE (398 aa)) are disordered. Residue S2 is modified to N-acetylserine. S12 carries the post-translational modification Phosphoserine. Residues 18 to 27 (RNTAGAQPQD) are compositionally biased toward polar residues. A compositionally biased stretch (low complexity) spans 29 to 43 (SIGGRSCSSSSVVIV). Over residues 48–70 (DPDRANTSEKQKTGQVPKKDNSR) the composition is skewed to basic and acidic residues. Phosphoserine is present on residues S77, S85, and S100. Polar residues predominate over residues 78 to 88 (PDYNRTNSPSS). Positions 154–164 (SSCIKSASVSE) are enriched in polar residues. 2 stretches are compositionally biased toward low complexity: residues 175 to 188 (PTKL…SAKA) and 196 to 215 (SSSA…ASSA). K181 carries the N6-acetyllysine modification. The span at 280–290 (PGSSKSETSKP) shows a compositional bias: polar residues. 2 positions are modified to phosphoserine: S310 and S312. A compositionally biased stretch (low complexity) spans 330-339 (GSCASASRRG). Residues 346 to 358 (GAAEARRQEKMAD) show a composition bias toward basic and acidic residues. Residues 362-371 (NQETVNSSAA) are compositionally biased toward polar residues. Residues 749-836 (MLKKGNAQNT…DPELAKSFIK (88 aa)) enclose the WWE domain. The segment at 938–1044 (SLLTSPPKAC…QSPKSSFLAS (107 aa)) is disordered. S942 is subject to Phosphoserine. Positions 948–960 (TNGSGSLGSTPSV) are enriched in polar residues. Residues 961–973 (NSGTATAATNASA) show a composition bias toward low complexity. Phosphoserine is present on residues S991 and S997. Residues 1001-1014 (KRKRLPKRGSRRPK) show a composition bias toward basic residues. Residue S1016 is modified to Phosphoserine. Basic and acidic residues predominate over residues 1017–1026 (PPRDDDKVDN). The span at 1029-1040 (KSPTTTQSPKSS) shows a compositional bias: low complexity. A phosphoserine mark is found at S1030, S1317, S1322, S1329, and S1376. T1377 carries the phosphothreonine modification. 2 disordered regions span residues 1407–1434 (SNKD…AKKH) and 1568–1587 (TNPE…PRLD). An N6-acetyllysine modification is found at K1425. Phosphoserine is present on S1427. The K-box stretch occupies residues 1496–1570 (EIIPTSEFIN…AMQRLLDTNP (75 aa)). The region spanning 1885–1992 (PDHGYTHDSR…REGQQSFHLS (108 aa)) is the HECT domain. Residue C1959 is the Glycyl thioester intermediate of the active site.

The protein belongs to the UPL family. K-HECT subfamily. Interacts with MYC; leading to disrupt interaction with isoform p19ARF/ARF of CDKN2A. Interacts with TRADD; leading to disrupt interaction with isoform p19ARF/ARF of CDKN2A. Interacts with SMARCC1; leading to disrupt interaction with SMARCE1.

It localises to the nucleus. Its subcellular location is the nucleoplasm. The catalysed reaction is S-ubiquitinyl-[E2 ubiquitin-conjugating enzyme]-L-cysteine + [acceptor protein]-L-lysine = [E2 ubiquitin-conjugating enzyme]-L-cysteine + N(6)-ubiquitinyl-[acceptor protein]-L-lysine.. Its pathway is protein modification; protein ubiquitination. In terms of biological role, E3 ubiquitin-protein ligase involved in ubiquitin fusion degradation (UFD) pathway and regulation of DNA repair. Part of the ubiquitin fusion degradation (UFD) pathway, a process that mediates ubiquitination of protein at their N-terminus, regardless of the presence of lysine residues in target proteins. Acts as a key regulator of DNA damage response by acting as a suppressor of RNF168, an E3 ubiquitin-protein ligase that promotes accumulation of 'Lys-63'-linked histone H2A and H2AX at DNA damage sites, thereby acting as a guard against excessive spreading of ubiquitinated chromatin at damaged chromosomes. In normal cells, mediates ubiquitination and degradation of isoform p19ARF/ARF of CDKN2A, a lysine-less tumor suppressor required for p53/TP53 activation under oncogenic stress. In cancer cells, however, isoform p19ARF/ARF and TRIP12 are located in different cell compartments, preventing isoform p19ARF/ARF ubiquitination and degradation. Does not mediate ubiquitination of isoform p16-INK4a of CDKN2A. Also catalyzes ubiquitination of NAE1 and SMARCE1, leading to their degradation. Ubiquitination and degradation of target proteins is regulated by interaction with proteins such as MYC, TRADD or SMARCC1, which disrupt the interaction between TRIP12 and target proteins. Mediates ubiquitination of ASXL1: following binding to N(6)-methyladenosine methylated DNA, ASXL1 is ubiquitinated by TRIP12, leading to its degradation and subsequent inactivation of the PR-DUB complex. This is E3 ubiquitin-protein ligase TRIP12 (TRIP12) from Bos taurus (Bovine).